Consider the following 302-residue polypeptide: HPr kinase/phosphorylase (302 aa).

Residues histidine 136 and lysine 157 contribute to the active site. ATP is bound at residue 151 to 158; sequence GESGIGKS. Serine 158 is a Mg(2+) binding site. Aspartate 175 (proton acceptor; for phosphorylation activity. Proton donor; for dephosphorylation activity) is an active-site residue. The important for the catalytic mechanism of both phosphorylation and dephosphorylation stretch occupies residues 198-207; it reads LEVRGLGIID. Mg(2+) is bound at residue glutamate 199. The active site involves arginine 240. The tract at residues 261-266 is important for the catalytic mechanism of dephosphorylation; that stretch reads PIRPGR.

Belongs to the HPrK/P family. As to quaternary structure, homohexamer. Mg(2+) is required as a cofactor.

The catalysed reaction is [HPr protein]-L-serine + ATP = [HPr protein]-O-phospho-L-serine + ADP + H(+). The enzyme catalyses [HPr protein]-O-phospho-L-serine + phosphate + H(+) = [HPr protein]-L-serine + diphosphate. Functionally, catalyzes the ATP- as well as the pyrophosphate-dependent phosphorylation of a specific serine residue in HPr, a phosphocarrier protein of the phosphoenolpyruvate-dependent sugar phosphotransferase system (PTS). HprK/P also catalyzes the pyrophosphate-producing, inorganic phosphate-dependent dephosphorylation (phosphorolysis) of seryl-phosphorylated HPr (P-Ser-HPr). The two antagonistic activities of HprK/P are regulated by several intracellular metabolites, which change their concentration in response to the absence or presence of rapidly metabolisable carbon sources (glucose, fructose, etc.) in the growth medium. Therefore, by controlling the phosphorylation state of HPr, HPrK/P is a sensor enzyme that plays a major role in the regulation of carbon metabolism and sugar transport: it mediates carbon catabolite repression (CCR), and regulates PTS-catalyzed carbohydrate uptake and inducer exclusion. The sequence is that of HPr kinase/phosphorylase from Clostridium beijerinckii (strain ATCC 51743 / NCIMB 8052) (Clostridium acetobutylicum).